The chain runs to 91 residues: Potassium channel toxin MeuTXK-beta-2 (91 aa).

Residues 1–19 form the signal peptide; it reads MQRNLVVLLFLGMVALSSC. In terms of domain architecture, BetaSPN-type CS-alpha/beta spans 54–91; sequence QFGCSAYQGYCDDHCQDIEKKEGFCHGFKCKCGIPMGF. Disulfide bonds link C57–C78, C64–C83, and C68–C85.

Belongs to the long chain scorpion toxin family. Class 1 subfamily. In terms of tissue distribution, expressed by the venom gland.

It localises to the secreted. Functionally, has a low affinity binding to potassium channels of rat brain synaptosomes. Displays weak antibacterial activity against Stenotrophomonas sp. Strongly inhibits the development of the Plasmodium berghei ookinetes. Displays slight hemolytic effect on mouse erythrocytes. Induces cytolysis on Xenopus oocytes at high concentrations. Is not toxic towards mice and towards the insect Tenebrio molitor. In Mesobuthus eupeus (Lesser Asian scorpion), this protein is Potassium channel toxin MeuTXK-beta-2.